Consider the following 298-residue polypeptide: N-acetylmuramic acid 6-phosphate etherase (298 aa).

The SIS domain occupies 55 to 218 (IHAQVSGGGR…STGLMIKSGK (164 aa)). Catalysis depends on Glu-83, which acts as the Proton donor. Glu-114 is a catalytic residue.

It belongs to the GCKR-like family. MurNAc-6-P etherase subfamily. Homodimer.

It catalyses the reaction N-acetyl-D-muramate 6-phosphate + H2O = N-acetyl-D-glucosamine 6-phosphate + (R)-lactate. Its pathway is amino-sugar metabolism; 1,6-anhydro-N-acetylmuramate degradation. It functions in the pathway amino-sugar metabolism; N-acetylmuramate degradation. The protein operates within cell wall biogenesis; peptidoglycan recycling. In terms of biological role, specifically catalyzes the cleavage of the D-lactyl ether substituent of MurNAc 6-phosphate, producing GlcNAc 6-phosphate and D-lactate. Together with AnmK, is also required for the utilization of anhydro-N-acetylmuramic acid (anhMurNAc) either imported from the medium or derived from its own cell wall murein, and thus plays a role in cell wall recycling. The chain is N-acetylmuramic acid 6-phosphate etherase from Escherichia fergusonii (strain ATCC 35469 / DSM 13698 / CCUG 18766 / IAM 14443 / JCM 21226 / LMG 7866 / NBRC 102419 / NCTC 12128 / CDC 0568-73).